Reading from the N-terminus, the 498-residue chain is Glycerol kinase (498 aa).

Threonine 12 contacts ADP. ATP contacts are provided by threonine 12, threonine 13, and serine 14. Threonine 12 lines the sn-glycerol 3-phosphate pocket. An ADP-binding site is contributed by arginine 16. Residues arginine 82, glutamate 83, tyrosine 134, and aspartate 244 each coordinate sn-glycerol 3-phosphate. Positions 82, 83, 134, 244, and 245 each coordinate glycerol. The ADP site is built by threonine 266 and glycine 310. ATP-binding residues include threonine 266, glycine 310, glutamine 314, and glycine 411. 2 residues coordinate ADP: glycine 411 and asparagine 415.

Belongs to the FGGY kinase family.

It catalyses the reaction glycerol + ATP = sn-glycerol 3-phosphate + ADP + H(+). It participates in polyol metabolism; glycerol degradation via glycerol kinase pathway; sn-glycerol 3-phosphate from glycerol: step 1/1. Inhibited by fructose 1,6-bisphosphate (FBP). In terms of biological role, key enzyme in the regulation of glycerol uptake and metabolism. Catalyzes the phosphorylation of glycerol to yield sn-glycerol 3-phosphate. The sequence is that of Glycerol kinase from Chloroflexus aggregans (strain MD-66 / DSM 9485).